A 698-amino-acid chain; its full sequence is Ubiquitin-like modifier-activating enzyme ATG7 (698 aa).

The FAP motif motif lies at 11 to 13 (FAP). A Glycyl lysine isopeptide (Lys-Gly) (interchain with G-Cter in ubiquitin) cross-link involves residue K41. Residue C567 is the Glycyl thioester intermediate of the active site. S693 carries the phosphoserine modification.

This sequence belongs to the ATG7 family. In terms of assembly, homodimer. Interacts with ATG3; this interaction is essential for the transfer of ATG8-like proteins's thioester from ATG7 to ATG3 and plays a role in the conjugation of ATG12 to ATG5. Interacts with ATG12. Forms intermediate conjugates with GABARAPL1. Forms intermediate conjugates with ATG8-like proteins such as GABARAP, GABARAPL2 or MAP1LC3A. Interacts with EP300 acetyltransferase. Interacts with FOXO1. Post-translationally, acetylated by EP300. In terms of processing, polyubiquitinated on Lys-41 via 'Lys-63'-linked ubiquitin by TRIM32; this modification positiely regulates ATG8 and ATG12 activating enzyme activity leading to initiation of autophagy under metabolic stress. In terms of tissue distribution, widely expressed.

The protein resides in the cytoplasm. Its subcellular location is the preautophagosomal structure. E1-like activating enzyme involved in the 2 ubiquitin-like systems required for cytoplasm to vacuole transport (Cvt) and autophagy. Activates ATG12 for its conjugation with ATG5 as well as the ATG8 family proteins for their conjugation with phosphatidylethanolamine. Both systems are needed for the ATG8 association to Cvt vesicles and autophagosomes membranes. Required for autophagic death induced by caspase-8 inhibition. Facilitates LC3-I lipidation with phosphatidylethanolamine to form LC3-II which is found on autophagosomal membranes. Required for mitophagy which contributes to regulate mitochondrial quantity and quality by eliminating the mitochondria to a basal level to fulfill cellular energy requirements and preventing excess ROS production. Modulates p53/TP53 activity to regulate cell cycle and survival during metabolic stress. Also plays a key role in the maintenance of axonal homeostasis, the prevention of axonal degeneration, the maintenance of hematopoietic stem cells, the formation of Paneth cell granules, as well as in adipose differentiation. Plays a role in regulating the liver clock and glucose metabolism by mediating the autophagic degradation of CRY1 (clock repressor) in a time-dependent manner. In Rattus norvegicus (Rat), this protein is Ubiquitin-like modifier-activating enzyme ATG7.